The primary structure comprises 281 residues: MYIFFPKLNPIIFTIGPVSARWYGFMYVISFLFAMWYGKKCSIKNKKIWYEKKIETLLYAIFLGSCIGGRIGYIIFYNFSYYSQNMLSVFYIWEGGMSFHGGLIGAIIVMSYFSFKYKKKILEISDFITPLIPFGLGAGRIGNFINSELWGRVSPNFSYAMIFPNSQNQDLKEIKKYPELQLLLDQYGALPRHPTQLYEFFLEGILLFFIIYFFSKKDRPTGSISGLFLIFYGLFRIFIEFFREPDPQIGLLKNIITMGQILSLPMIIAGLIIMYKSCYKK.

The next 7 helical transmembrane spans lie at 11 to 31 (IIFT…VISF), 57 to 77 (LLYA…IIFY), 89 to 109 (VFYI…AIIV), 121 to 141 (ILEI…AGRI), 194 to 214 (PTQL…IYFF), 222 to 242 (GSIS…IEFF), and 255 to 275 (IITM…IIMY). R140 is an a 1,2-diacyl-sn-glycero-3-phospho-(1'-sn-glycerol) binding site.

It belongs to the Lgt family.

The protein resides in the cell inner membrane. The catalysed reaction is L-cysteinyl-[prolipoprotein] + a 1,2-diacyl-sn-glycero-3-phospho-(1'-sn-glycerol) = an S-1,2-diacyl-sn-glyceryl-L-cysteinyl-[prolipoprotein] + sn-glycerol 1-phosphate + H(+). The protein operates within protein modification; lipoprotein biosynthesis (diacylglyceryl transfer). In terms of biological role, catalyzes the transfer of the diacylglyceryl group from phosphatidylglycerol to the sulfhydryl group of the N-terminal cysteine of a prolipoprotein, the first step in the formation of mature lipoproteins. The sequence is that of Phosphatidylglycerol--prolipoprotein diacylglyceryl transferase from Buchnera aphidicola subsp. Acyrthosiphon pisum (strain Tuc7).